We begin with the raw amino-acid sequence, 369 residues long: Extracellular signal-regulated kinase 2 (369 aa).

The Protein kinase domain maps to 14–304; the sequence is YEVLQKIGKG…AEEALAHPFV (291 aa). ATP contacts are provided by residues 20 to 28 and Lys43; that span reads IGKGAYGIV. Asp137 (proton acceptor) is an active-site residue. Thr176 is subject to Phosphothreonine. The short motif at 176–178 is the TXY element; the sequence is TEY. At Tyr178 the chain carries Phosphotyrosine. Residues 346–369 are disordered; sequence KKKEERKKQTNPTKPDTTAPTLST. The span at 355–369 shows a compositional bias: polar residues; that stretch reads TNPTKPDTTAPTLST.

This sequence belongs to the protein kinase superfamily. CMGC Ser/Thr protein kinase family. MAP kinase subfamily. The cofactor is Mg(2+). Dually phosphorylated on Thr-176 and Tyr-178, which activates the enzyme.

It carries out the reaction L-seryl-[protein] + ATP = O-phospho-L-seryl-[protein] + ADP + H(+). The enzyme catalyses L-threonyl-[protein] + ATP = O-phospho-L-threonyl-[protein] + ADP + H(+). Its activity is regulated as follows. Activated by tyrosine and threonine phosphorylation. In terms of biological role, implicated in the relay of the cAMP chemotactic signal and cell differentiation. Important for receptor-mediated activation of adenylyl cyclase. The chain is Extracellular signal-regulated kinase 2 (erkB) from Dictyostelium discoideum (Social amoeba).